Reading from the N-terminus, the 461-residue chain is V-type ATP synthase beta chain 1 (461 aa).

Belongs to the ATPase alpha/beta chains family.

Functionally, produces ATP from ADP in the presence of a proton gradient across the membrane. The V-type beta chain is a regulatory subunit. The protein is V-type ATP synthase beta chain 1 of Clostridium tetani (strain Massachusetts / E88).